We begin with the raw amino-acid sequence, 295 residues long: MASLKDIRAQIESTKNTQQITKAMKLVSAAKLRKAQNNIVNMRPYALALRQVIADIAVTNKVSHPLMEKKEQVKNVLLVVITSDRGLCGAFNSNINKFAEAYYNSNKASLEKIDFLFVGRRGHDYFARRGIKAVDYITKLDKDISYELASKVANRVMNDYLEGSYDEVRIVHNEFKSAISQVVTAETLLPIDLGMTTFKKEADTASNFAVDMIFEPAPEQIIKELLEKHFELQVYRCMSESVAGEHGARMSAMENATNNAKEMINKLTLTYNKLRQEKITTELIEIVSGAEALKG.

It belongs to the ATPase gamma chain family. In terms of assembly, F-type ATPases have 2 components, CF(1) - the catalytic core - and CF(0) - the membrane proton channel. CF(1) has five subunits: alpha(3), beta(3), gamma(1), delta(1), epsilon(1). CF(0) has three main subunits: a, b and c.

The protein localises to the cell inner membrane. Produces ATP from ADP in the presence of a proton gradient across the membrane. The gamma chain is believed to be important in regulating ATPase activity and the flow of protons through the CF(0) complex. This chain is ATP synthase gamma chain, found in Bdellovibrio bacteriovorus (strain ATCC 15356 / DSM 50701 / NCIMB 9529 / HD100).